Reading from the N-terminus, the 111-residue chain is Ribonuclease P protein component (111 aa).

This sequence belongs to the RnpA family. Consists of a catalytic RNA component (M1 or rnpB) and a protein subunit.

It carries out the reaction Endonucleolytic cleavage of RNA, removing 5'-extranucleotides from tRNA precursor.. In terms of biological role, RNaseP catalyzes the removal of the 5'-leader sequence from pre-tRNA to produce the mature 5'-terminus. It can also cleave other RNA substrates such as 4.5S RNA. The protein component plays an auxiliary but essential role in vivo by binding to the 5'-leader sequence and broadening the substrate specificity of the ribozyme. The chain is Ribonuclease P protein component from Clostridium botulinum (strain Loch Maree / Type A3).